We begin with the raw amino-acid sequence, 616 residues long: Chaperone protein HscA (616 aa).

Belongs to the heat shock protein 70 family.

Functionally, chaperone involved in the maturation of iron-sulfur cluster-containing proteins. Has a low intrinsic ATPase activity which is markedly stimulated by HscB. Involved in the maturation of IscU. The chain is Chaperone protein HscA from Cronobacter sakazakii (strain ATCC BAA-894) (Enterobacter sakazakii).